Consider the following 192-residue polypeptide: Interleukin-18 (192 aa).

The propeptide occupies 1–35 (MAAMSEDSCVNFKEMMFIDNTLYFIPEENGDLESD).

It belongs to the IL-1 family. In terms of assembly, forms a ternary complex with ligand-binding receptor subunit IL18R1 and signaling receptor subunit IL18RAP at the plasma membrane. Mature IL18 first binds to IL18R1 forming a low affinity binary complex, which then interacts with IL18RAP to form a high affinity ternary complex that signals inside the cell. Interacts with cargo receptor TMED10; the interaction mediates the translocation from the cytoplasm into the ERGIC (endoplasmic reticulum-Golgi intermediate compartment) and thereby secretion. In terms of processing, the pro-IL-18 precursor is processed by CASP1 to yield its mature, active form. The pro-IL-18 precursor is however not processed by Casp4/Casp11 in rodents. The pro-IL-18 precursor features autoinhibitory interactions between the propeptide and the post-cleavage-site region, preventing recognition by the IL18R1 receptor. Processing by CASP1 induces conformational changes to generate critical receptor-binding sites. The mature form is then secreted and released in the extracellular milieu by passing through the gasdermin-D (GSDMD) pore. In contrast, cleavage by CASP3 inactivates IL18.

The protein resides in the cytoplasm. It is found in the secreted. Its function is as follows. Pro-inflammatory cytokine primarily involved in epithelial barrier repair, polarized T-helper 1 (Th1) cell and natural killer (NK) cell immune responses. Upon binding to IL18R1 and IL18RAP, forms a signaling ternary complex which activates NF-kappa-B, triggering synthesis of inflammatory mediators. Synergizes with IL12/interleukin-12 to induce IFNG synthesis from T-helper 1 (Th1) cells and natural killer (NK) cells. Involved in transduction of inflammation downstream of pyroptosis: its mature form is specifically released in the extracellular milieu by passing through the gasdermin-D (GSDMD) pore. The protein is Interleukin-18 of Mus musculus (Mouse).